The chain runs to 619 residues: Bifunctional glutathionylspermidine synthetase/amidase (619 aa).

The gsp amidase stretch occupies residues 2–195 (SKGTTSQDAP…LGWMIQTEDT (194 aa)). The region spanning 34-176 (DPQEYEDDAV…MVVENGCYTL (143 aa)) is the Peptidase C51 domain. Residue Q58 coordinates glutathionylspermidine. C59 acts as the S-(gamma-glutamyl-cysteinyl-glycyl)-cysteine intermediate in catalysis. Position 59 is a cysteine sulfenic acid (-SOH); transient (C59). Residues R64, 78–81 (VGMA), and N149 each bind glutathionylspermidine. The segment at 196 to 205 (EYSLPQPEIA) is linker. Positions 206-619 (GELLKISGAR…DIEPLIVVKK (414 aa)) are gsp synthetase. R316 is a binding site for glutathione. An ATP-binding site is contributed by 316–318 (RMD). 3 residues coordinate Mg(2+): D318, E330, and N332. S335 contacts glutathione. A spermidine-binding site is contributed by E391. E392 and T446 together coordinate glutathione. Residues K498, K533, 539-540 (CG), 568-571 (QQLW), Q582, and 603-605 (LVI) contribute to the ATP site. D610 is a spermidine binding site.

The protein in the C-terminal section; belongs to the glutathionylspermidine synthase preATP-grasp family. Homodimer. Oxidation of Cys-59 to sulfenic acid during oxidative stress selectively inhibits the amidase activity which leads to a rapid increase in the amounts of intracellular Gsp and Gsp S-thiolated proteins (GspSSPs).

It carries out the reaction spermidine + glutathione + ATP = glutathionylspermidine + ADP + phosphate + H(+). It catalyses the reaction glutathionylspermidine + H2O = spermidine + glutathione. It participates in sulfur metabolism; glutathione metabolism. Its pathway is amine and polyamine metabolism; spermidine metabolism. With respect to regulation, when exposed to oxidative stress, Gsp amidase activity is transiently inhibited in vivo by oxidation of the catalytic Cys-59 thiol to sulfenic acid; this modification does not affect Gsp synthetase activity. Gsp amidase activity is negatively autoregulated by the Gsp synthetase domain, and is activated by the Gsp synthetase substrates, GSH and ATP-Mg(2+); the occupancy of the synthetase active site may initiate communication through the protein as manifest by the release of inhibition of the amidase activity. A tetrahedral phosphonate analog of glutathionylspermidine, designed as a mimic of the proposed tetrahedral intermediate for either reaction, inhibits the synthetase activity (Ki of 10 uM) but does not inhibit the amidase activity. Amidase activity is inhibited by iodoacetamide in vitro. Catalyzes the formation of an amide bond between glutathione (GSH) and spermidine coupled with hydrolysis of ATP; also catalyzes the opposing reaction, i.e. the hydrolysis of glutathionylspermidine (Gsp) back to glutathione and spermidine. The amidase active site can also hydrolyze Gsp-disulfide (Gsp-S-S-Gsp) to Gsp-SG and Gsp S-thiolated proteins (GspSSPs) to GSH S-thiolated protein (GSSPs). Likely acts synergistically with glutaredoxin to regulate the redox environment of E.coli and defend against oxidative damage. In vitro, the amidase active site also catalyzes hydrolysis of amide and ester derivatives of glutathione (e.g. glutathione ethyl ester and glutathione amide) but lacks activity toward acetylspermidine (N1 and N8) and acetylspermine (N1). The polypeptide is Bifunctional glutathionylspermidine synthetase/amidase (gss) (Escherichia coli (strain K12)).